The sequence spans 72 residues: Translation initiation factor IF-1 (72 aa).

The region spanning A2–K72 is the S1-like domain.

The protein belongs to the IF-1 family. In terms of assembly, component of the 30S ribosomal translation pre-initiation complex which assembles on the 30S ribosome in the order IF-2 and IF-3, IF-1 and N-formylmethionyl-tRNA(fMet); mRNA recruitment can occur at any time during PIC assembly.

It localises to the cytoplasm. One of the essential components for the initiation of protein synthesis. Stabilizes the binding of IF-2 and IF-3 on the 30S subunit to which N-formylmethionyl-tRNA(fMet) subsequently binds. Helps modulate mRNA selection, yielding the 30S pre-initiation complex (PIC). Upon addition of the 50S ribosomal subunit IF-1, IF-2 and IF-3 are released leaving the mature 70S translation initiation complex. This Lactiplantibacillus plantarum (strain ATCC BAA-793 / NCIMB 8826 / WCFS1) (Lactobacillus plantarum) protein is Translation initiation factor IF-1.